The sequence spans 94 residues: Putative pterin-4-alpha-carbinolamine dehydratase (94 aa).

This sequence belongs to the pterin-4-alpha-carbinolamine dehydratase family.

It carries out the reaction (4aS,6R)-4a-hydroxy-L-erythro-5,6,7,8-tetrahydrobiopterin = (6R)-L-erythro-6,7-dihydrobiopterin + H2O. This Mycobacterium leprae (strain Br4923) protein is Putative pterin-4-alpha-carbinolamine dehydratase.